Reading from the N-terminus, the 202-residue chain is UPF0316 protein SH1041 (202 aa).

3 helical membrane passes run 8-28 (PWSM…FLTM), 40-60 (MAAA…GMVM), and 66-86 (IQNI…GMKI).

This sequence belongs to the UPF0316 family.

It is found in the cell membrane. This Staphylococcus haemolyticus (strain JCSC1435) protein is UPF0316 protein SH1041.